Consider the following 189-residue polypeptide: Peptidyl-tRNA hydrolase (189 aa).

Tyr16 serves as a coordination point for tRNA. His21 acts as the Proton acceptor in catalysis. TRNA-binding residues include Phe67, Asn69, and Asn115.

This sequence belongs to the PTH family. In terms of assembly, monomer.

Its subcellular location is the cytoplasm. The enzyme catalyses an N-acyl-L-alpha-aminoacyl-tRNA + H2O = an N-acyl-L-amino acid + a tRNA + H(+). In terms of biological role, hydrolyzes ribosome-free peptidyl-tRNAs (with 1 or more amino acids incorporated), which drop off the ribosome during protein synthesis, or as a result of ribosome stalling. Its function is as follows. Catalyzes the release of premature peptidyl moieties from peptidyl-tRNA molecules trapped in stalled 50S ribosomal subunits, and thus maintains levels of free tRNAs and 50S ribosomes. In Legionella pneumophila (strain Lens), this protein is Peptidyl-tRNA hydrolase.